The primary structure comprises 584 residues: Eukaryotic translation initiation factor 3 subunit D (584 aa).

The disordered stretch occupies residues 118 to 184 (IFTRGRGQRG…KDYDKPQRNR (67 aa)). Over residues 127-167 (GRGGQDTRGGGRQQFQRGGRGGQQYGGGGYSDRGGGRGGGA) the composition is skewed to gly residues. Residues 173-184 (GWKDYDKPQRNR) show a composition bias toward basic and acidic residues. The tract at residues 312–326 (ALDMVTVNENAADAP) is RNA gate. The segment at 563–584 (PANGLDDDDEGPEPEGVAEEED) is disordered. Residues 567–584 (LDDDDEGPEPEGVAEEED) show a composition bias toward acidic residues.

Belongs to the eIF-3 subunit D family. In terms of assembly, component of the eukaryotic translation initiation factor 3 (eIF-3) complex.

The protein localises to the cytoplasm. MRNA cap-binding component of the eukaryotic translation initiation factor 3 (eIF-3) complex, which is involved in protein synthesis of a specialized repertoire of mRNAs and, together with other initiation factors, stimulates binding of mRNA and methionyl-tRNAi to the 40S ribosome. The eIF-3 complex specifically targets and initiates translation of a subset of mRNAs involved in cell proliferation. In the eIF-3 complex, eif3d specifically recognizes and binds the 7-methylguanosine cap of a subset of mRNAs. This Chaetomium globosum (strain ATCC 6205 / CBS 148.51 / DSM 1962 / NBRC 6347 / NRRL 1970) (Soil fungus) protein is Eukaryotic translation initiation factor 3 subunit D.